We begin with the raw amino-acid sequence, 591 residues long: L-fucose isomerase (591 aa).

Catalysis depends on proton acceptor residues Glu-337 and Asp-361. The Mn(2+) site is built by Glu-337, Asp-361, and His-528.

Belongs to the L-fucose isomerase family. As to quaternary structure, homohexamer. Mn(2+) is required as a cofactor.

Its subcellular location is the cytoplasm. The catalysed reaction is L-fucose = L-fuculose. Its pathway is carbohydrate degradation; L-fucose degradation; L-lactaldehyde and glycerone phosphate from L-fucose: step 1/3. Its function is as follows. Converts the aldose L-fucose into the corresponding ketose L-fuculose. The sequence is that of L-fucose isomerase from Klebsiella pneumoniae (strain 342).